The sequence spans 380 residues: Glucose-1-phosphate adenylyltransferase (380 aa).

Residues tyrosine 99, glycine 164, 179–180, and serine 190 contribute to the alpha-D-glucose 1-phosphate site; that span reads EK.

The protein belongs to the bacterial/plant glucose-1-phosphate adenylyltransferase family. As to quaternary structure, homotetramer.

The enzyme catalyses alpha-D-glucose 1-phosphate + ATP + H(+) = ADP-alpha-D-glucose + diphosphate. It functions in the pathway glycan biosynthesis; glycogen biosynthesis. Involved in the biosynthesis of ADP-glucose, a building block required for the elongation reactions to produce glycogen. Catalyzes the reaction between ATP and alpha-D-glucose 1-phosphate (G1P) to produce pyrophosphate and ADP-Glc. This is Glucose-1-phosphate adenylyltransferase from Bacillus subtilis (strain 168).